The primary structure comprises 424 residues: Enolase (424 aa).

Residue Gln162 participates in (2R)-2-phosphoglycerate binding. The active-site Proton donor is Glu204. Asp241, Glu284, and Asp311 together coordinate Mg(2+). The (2R)-2-phosphoglycerate site is built by Lys336, Arg365, Ser366, and Lys387. The active-site Proton acceptor is Lys336.

Belongs to the enolase family. The cofactor is Mg(2+).

It localises to the cytoplasm. Its subcellular location is the secreted. The protein resides in the cell surface. The catalysed reaction is (2R)-2-phosphoglycerate = phosphoenolpyruvate + H2O. The protein operates within carbohydrate degradation; glycolysis; pyruvate from D-glyceraldehyde 3-phosphate: step 4/5. Its function is as follows. Catalyzes the reversible conversion of 2-phosphoglycerate (2-PG) into phosphoenolpyruvate (PEP). It is essential for the degradation of carbohydrates via glycolysis. This chain is Enolase, found in Rhizobium meliloti (strain 1021) (Ensifer meliloti).